Here is a 923-residue protein sequence, read N- to C-terminus: MGELAKEILPVNIEDELKQSYLDYAMSVIVGRALPDARDGLKPVHRRVLYAMSELGNDWNKPYKKSARVVGDVIGKYHPHGDTAVYDTIVRMAQPFSLRYMLVDGQGNFGSVDGDNAAAMRYTEVRMAKLAHELLADLEKETVDWVPNYDGTEQIPAVMPTKIPNLLVNGSSGIAVGMATNIPPHNLGEVIDGCLALMDNPDLTVDELMQYIPGPDFPTAGIINGRAGIIEAYRTGRGRIYIRARAVVEEMEKGGGREQIIITELPYQLNKARLIEKIAELVKEKKIEGISELRDESDKDGMRVVIELRRGEVGEVVLNNLYAQTQLQSVFGINVVALVDGQPRTLNLKDMLEVFVRHRREVVTRRTVYELRKARERGHILEGQAVALSNIDPVIELIKSSPTPAEAKERLIATAWESSAVEAMVERAGADACRPEDLDPQYGLRDGKYYLSPEQAQAILELRLHRLTGLEHEKLLSEYQEILNLIGELIRILTNPARLMEVIREELEAVKAEFGDARRTEIVASQVDLTIADLITEEDRVVTISHGGYAKSQPLAAYQAQRRGGKGKSATGMKDEDYIEHLLVANSHATLLLFSSKGKVYWLRTFEIPEASRTARGRPLVNLLPLDEGERITAMLQIDLEALQQNGGADDDLDEAEGAVLEGEVVEAAEVEEVEGETAELVAEPTGAYIFMATAFGTVKKTPLVQFSRPRSSGLIALKLEEGDTLIAAAITDGAKEVMLFSSAGKVIRFAESVVRIMGRNARGVRGMRLGKGQQLISMLIPESGAQILTASERGFGKRTPLSKFPRRGRGGQGVIAMVTNERNGALIAAVQVQEGEEIMLISDQGTLVRTRVDEVSLSGRNTQGVTLIKLASDEVLVGLERVQEPSGGDDEDLPEGEEAAESLGESAESESEPAAEAEGNEE.

Positions 34–534 (LPDARDGLKP…SQVDLTIADL (501 aa)) constitute a Topo IIA-type catalytic domain. Y122 acts as the O-(5'-phospho-DNA)-tyrosine intermediate in catalysis. Residues 561 to 567 (QRRGGKG) carry the GyrA-box motif. The tract at residues 881–923 (ERVQEPSGGDDEDLPEGEEAAESLGESAESESEPAAEAEGNEE) is disordered. 2 stretches are compositionally biased toward acidic residues: residues 888 to 901 (GGDD…EEAA) and 908 to 923 (AESE…GNEE).

Belongs to the type II topoisomerase GyrA/ParC subunit family. Heterotetramer, composed of two GyrA and two GyrB chains. In the heterotetramer, GyrA contains the active site tyrosine that forms a transient covalent intermediate with DNA, while GyrB binds cofactors and catalyzes ATP hydrolysis.

The protein resides in the cytoplasm. The catalysed reaction is ATP-dependent breakage, passage and rejoining of double-stranded DNA.. In terms of biological role, a type II topoisomerase that negatively supercoils closed circular double-stranded (ds) DNA in an ATP-dependent manner to modulate DNA topology and maintain chromosomes in an underwound state. Negative supercoiling favors strand separation, and DNA replication, transcription, recombination and repair, all of which involve strand separation. Also able to catalyze the interconversion of other topological isomers of dsDNA rings, including catenanes and knotted rings. Type II topoisomerases break and join 2 DNA strands simultaneously in an ATP-dependent manner. The chain is DNA gyrase subunit A from Pseudomonas aeruginosa (strain ATCC 15692 / DSM 22644 / CIP 104116 / JCM 14847 / LMG 12228 / 1C / PRS 101 / PAO1).